The primary structure comprises 281 residues: Protein synthesis inhibitor I (281 aa).

At Ala-2 the chain carries N-acetylalanine. Glu-175 is an active-site residue.

Belongs to the ribosome-inactivating protein family. Type 1 RIP subfamily.

It localises to the cytoplasm. The catalysed reaction is Endohydrolysis of the N-glycosidic bond at one specific adenosine on the 28S rRNA.. Its function is as follows. Inhibits the elongation phase of protein synthesis. It inactivates fungal ribosomes even more effectively than mammalian ribosomes and is thought to function as a constitutive antifungal agent in plants. This Hordeum vulgare (Barley) protein is Protein synthesis inhibitor I (RIP30).